We begin with the raw amino-acid sequence, 566 residues long: DNA ligase B (566 aa).

The N6-AMP-lysine intermediate role is filled by K125.

It belongs to the NAD-dependent DNA ligase family. LigB subfamily.

It carries out the reaction NAD(+) + (deoxyribonucleotide)n-3'-hydroxyl + 5'-phospho-(deoxyribonucleotide)m = (deoxyribonucleotide)n+m + AMP + beta-nicotinamide D-nucleotide.. Its function is as follows. Catalyzes the formation of phosphodiester linkages between 5'-phosphoryl and 3'-hydroxyl groups in double-stranded DNA using NAD as a coenzyme and as the energy source for the reaction. This Pseudomonas putida (strain ATCC 47054 / DSM 6125 / CFBP 8728 / NCIMB 11950 / KT2440) protein is DNA ligase B.